The primary structure comprises 511 residues: Apolipoprotein N-acyltransferase (511 aa).

The next 6 helical transmembrane spans lie at 7–25 (PGWPGHLLALAAGALTPLA), 58–78 (GWWYGFGAFGAGTSWIYVSIH), 90–110 (FLMLGFTAGVAFFFALPAWLW), 125–145 (LAFAALWLALELFRSWFLTGF), 163–183 (VPVGGVWLSSFVIALSAALLV), and 192–212 (GASLLLALVLLLGPWAAGLYL). A CN hydrolase domain is found at 230–470 (IQGNIAQELK…QGILRGEVIP (241 aa)). The active-site Proton acceptor is Glu269. The active site involves Lys330. The active-site Nucleophile is the Cys382. Residues 478–498 (LQYRVWPLAGLAGVLLLWALL) traverse the membrane as a helical segment.

The protein belongs to the CN hydrolase family. Apolipoprotein N-acyltransferase subfamily.

The protein localises to the cell inner membrane. The catalysed reaction is N-terminal S-1,2-diacyl-sn-glyceryl-L-cysteinyl-[lipoprotein] + a glycerophospholipid = N-acyl-S-1,2-diacyl-sn-glyceryl-L-cysteinyl-[lipoprotein] + a 2-acyl-sn-glycero-3-phospholipid + H(+). It functions in the pathway protein modification; lipoprotein biosynthesis (N-acyl transfer). In terms of biological role, catalyzes the phospholipid dependent N-acylation of the N-terminal cysteine of apolipoprotein, the last step in lipoprotein maturation. The sequence is that of Apolipoprotein N-acyltransferase from Pseudomonas paraeruginosa (strain DSM 24068 / PA7) (Pseudomonas aeruginosa (strain PA7)).